Here is a 157-residue protein sequence, read N- to C-terminus: Small ribosomal subunit protein uS7 (157 aa).

The protein belongs to the universal ribosomal protein uS7 family. Part of the 30S ribosomal subunit. Contacts proteins S9 and S11.

Functionally, one of the primary rRNA binding proteins, it binds directly to 16S rRNA where it nucleates assembly of the head domain of the 30S subunit. Is located at the subunit interface close to the decoding center, probably blocks exit of the E-site tRNA. The chain is Small ribosomal subunit protein uS7 from Protochlamydia amoebophila (strain UWE25).